Reading from the N-terminus, the 394-residue chain is Immune-associated nucleotide-binding protein 12 (394 aa).

Positions 45–251 (KPARTLLLVG…YMADLSHEIR (207 aa)) constitute an AIG1-type G domain. The segment at 54-61 (GRSGNGKS) is G1. GTP contacts are provided by residues 54–62 (GRSGNGKSA) and S75. Residues 81–85 (GVTTA) are G2. A G3 region spans residues 103-106 (DTPG). A G4 region spans residues 173 to 176 (TNED). A G5 region spans residues 210 to 212 (RNR). Residue N211 participates in GTP binding. The stretch at 289-387 (NQQLRQMMER…KQMATDLQKS (99 aa)) forms a coiled coil.

This sequence belongs to the TRAFAC class TrmE-Era-EngA-EngB-Septin-like GTPase superfamily. AIG1/Toc34/Toc159-like paraseptin GTPase family. IAN subfamily.

In Arabidopsis thaliana (Mouse-ear cress), this protein is Immune-associated nucleotide-binding protein 12.